Reading from the N-terminus, the 175-residue chain is Adenylate kinase isoenzyme 6 homolog (175 aa).

5 residues coordinate ATP: glycine 18, glycine 20, lysine 21, threonine 22, and threonine 23. The NMPbind stretch occupies residues 38-61; the sequence is CIGDVVKENHLHFGFDEKWKTYDV. The LID stretch occupies residues 113–123; the sequence is SRGYSLEKIQE. Arginine 114 provides a ligand contact to ATP.

It belongs to the adenylate kinase family. AK6 subfamily. As to quaternary structure, interacts with small ribosomal subunit protein uS11. Not a structural component of 43S pre-ribosomes, but transiently interacts with them by binding to uS11.

It is found in the cytoplasm. Its subcellular location is the nucleus. It catalyses the reaction AMP + ATP = 2 ADP. It carries out the reaction ATP + H2O = ADP + phosphate + H(+). In terms of biological role, broad-specificity nucleoside monophosphate (NMP) kinase that catalyzes the reversible transfer of the terminal phosphate group between nucleoside triphosphates and monophosphates. Also has ATPase activity. Involved in the late cytoplasmic maturation steps of the 40S ribosomal particles, specifically 18S rRNA maturation. While NMP activity is not required for ribosome maturation, ATPase activity is. Associates transiently with small ribosomal subunit protein uS11. ATP hydrolysis breaks the interaction with uS11. May temporarily remove uS11 from the ribosome to enable a conformational change of the ribosomal RNA that is needed for the final maturation step of the small ribosomal subunit. Its NMP activity may have a role in nuclear energy homeostasis. The sequence is that of Adenylate kinase isoenzyme 6 homolog (fap7) from Schizosaccharomyces pombe (strain 972 / ATCC 24843) (Fission yeast).